We begin with the raw amino-acid sequence, 242 residues long: Ubiquinone biosynthesis O-methyltransferase (242 aa).

Arg-36, Gly-56, Asp-77, and Met-130 together coordinate S-adenosyl-L-methionine.

This sequence belongs to the methyltransferase superfamily. UbiG/COQ3 family.

The catalysed reaction is a 3-demethylubiquinol + S-adenosyl-L-methionine = a ubiquinol + S-adenosyl-L-homocysteine + H(+). It carries out the reaction a 3-(all-trans-polyprenyl)benzene-1,2-diol + S-adenosyl-L-methionine = a 2-methoxy-6-(all-trans-polyprenyl)phenol + S-adenosyl-L-homocysteine + H(+). Its pathway is cofactor biosynthesis; ubiquinone biosynthesis. Its function is as follows. O-methyltransferase that catalyzes the 2 O-methylation steps in the ubiquinone biosynthetic pathway. The polypeptide is Ubiquinone biosynthesis O-methyltransferase (Pasteurella multocida (strain Pm70)).